The sequence spans 874 residues: Alanine--tRNA ligase (874 aa).

4 residues coordinate Zn(2+): H561, H565, C663, and H667.

It belongs to the class-II aminoacyl-tRNA synthetase family. It depends on Zn(2+) as a cofactor.

Its subcellular location is the cytoplasm. It carries out the reaction tRNA(Ala) + L-alanine + ATP = L-alanyl-tRNA(Ala) + AMP + diphosphate. Functionally, catalyzes the attachment of alanine to tRNA(Ala) in a two-step reaction: alanine is first activated by ATP to form Ala-AMP and then transferred to the acceptor end of tRNA(Ala). Also edits incorrectly charged Ser-tRNA(Ala) and Gly-tRNA(Ala) via its editing domain. The chain is Alanine--tRNA ligase from Trichodesmium erythraeum (strain IMS101).